We begin with the raw amino-acid sequence, 278 residues long: Protein saf1 (278 aa).

3 disordered regions span residues 1–43, 81–210, and 240–264; these read MLSK…RNMS, KKNI…DIEE, and QKLAKGQKIGQPDRDVSSQVQEDKD. 2 stretches are compositionally biased toward basic and acidic residues: residues 22–38 and 90–103; these read QIKVREERAKRHEERLS and GRVESDKTKEAERQ. Composition is skewed to basic residues over residues 104-116 and 169-183; these read HKPRKPFIPKNPK and REKKNKSFKPKHHKK. Over residues 186–202 the composition is skewed to polar residues; that stretch reads INASSAQPKSTTTTEAA.

The protein localises to the nucleus. Its subcellular location is the nucleolus. This Schizosaccharomyces pombe (strain 972 / ATCC 24843) (Fission yeast) protein is Protein saf1 (saf1).